A 36-amino-acid polypeptide reads, in one-letter code: Pancreatic polypeptide (36 aa).

Tyr36 is subject to Tyrosine amide.

This sequence belongs to the NPY family.

Its subcellular location is the secreted. In terms of biological role, hormone secreted by pancreatic cells that acts as a regulator of pancreatic and gastrointestinal functions. This is Pancreatic polypeptide (PPY) from Meleagris gallopavo (Wild turkey).